The sequence spans 189 residues: uncharacterized protein (189 aa).

This sequence belongs to the mimivirus R457/R459 family.

The protein localises to the virion. This is an uncharacterized protein from Acanthamoeba polyphaga mimivirus (APMV).